A 466-amino-acid polypeptide reads, in one-letter code: Putative ABC transporter ATP-binding protein MG065 (466 aa).

The ABC transporter domain maps to 233-463 (IELKNVYKYI…NLNPKQVEEI (231 aa)). 269 to 276 (GPSGSGKT) is an ATP binding site.

It belongs to the ABC transporter superfamily.

The protein is Putative ABC transporter ATP-binding protein MG065 of Mycoplasma genitalium (strain ATCC 33530 / DSM 19775 / NCTC 10195 / G37) (Mycoplasmoides genitalium).